The chain runs to 83 residues: Small ribosomal subunit protein uS17 (83 aa).

This sequence belongs to the universal ribosomal protein uS17 family. Part of the 30S ribosomal subunit.

One of the primary rRNA binding proteins, it binds specifically to the 5'-end of 16S ribosomal RNA. This Francisella tularensis subsp. tularensis (strain FSC 198) protein is Small ribosomal subunit protein uS17.